Reading from the N-terminus, the 72-residue chain is MARARKGALVQCDPSIKALILQIDAKMSDIVLEELDDTHLLVNPSKVEFVKHELNRLLSKNIYNPMDEEENQ.

This sequence belongs to the TFB5 family. In terms of assembly, component of the 7-subunit TFIIH core complex composed of XPB/SSL2, XPD/RAD3, SSL1, TFB1, TFB2, TFB4 and TFB5, which is active in NER. The core complex associates with the 3-subunit CTD-kinase module TFIIK composed of CCL1, KIN28 and TFB3 to form the 10-subunit holoenzyme (holo-TFIIH) active in transcription. An additionnal subunit, TFB6, plays a role in the dissociation of the SSL2 helicase from TFIIH after transcription initiation. Interacts with TFB2.

It is found in the nucleus. Its function is as follows. Component of the general transcription and DNA repair factor IIH (TFIIH) core complex, which is involved in general and transcription-coupled nucleotide excision repair (NER) of damaged DNA and, when complexed to TFIIK, in RNA transcription by RNA polymerase II. In NER, TFIIH acts by opening DNA around the lesion to allow the excision of the damaged oligonucleotide and its replacement by a new DNA fragment. In transcription, TFIIH has an essential role in transcription initiation. When the pre-initiation complex (PIC) has been established, TFIIH is required for promoter opening and promoter escape. Phosphorylation of the C-terminal tail (CTD) of the largest subunit of RNA polymerase II by the kinase module TFIIK controls the initiation of transcription. TFB5 is required for stable recruitment of TFIIH to a promoter, but not for stability of TFIIH subunits. This Saccharomyces cerevisiae (strain ATCC 204508 / S288c) (Baker's yeast) protein is General transcription and DNA repair factor IIH subunit TFB5 (TFB5).